The following is a 561-amino-acid chain: Asparagine synthetase [glutamine-hydrolyzing] (561 aa).

Residue Cys-2 is the For GATase activity of the active site. A Glutamine amidotransferase type-2 domain is found at 2 to 191 (CGIWALFGSD…PGHYEVLDLK (190 aa)). L-glutamine is bound by residues 49–53 (RLAVV), 75–77 (NGE), and Asp-97. In terms of domain architecture, Asparagine synthetase spans 213-536 (HAIYDSVEKL…PGRADWLTHY (324 aa)). Residues Leu-256, Ile-288, and 363 to 364 (SG) each bind ATP. At Lys-385 the chain carries N6-acetyllysine. At Thr-545 the chain carries Phosphothreonine. Ser-557 bears the Phosphoserine mark.

It carries out the reaction L-aspartate + L-glutamine + ATP + H2O = L-asparagine + L-glutamate + AMP + diphosphate + H(+). Its pathway is amino-acid biosynthesis; L-asparagine biosynthesis; L-asparagine from L-aspartate (L-Gln route): step 1/1. In Mus musculus (Mouse), this protein is Asparagine synthetase [glutamine-hydrolyzing] (Asns).